The primary structure comprises 105 residues: ATP-dependent Clp protease adapter protein ClpS (105 aa).

This sequence belongs to the ClpS family. Binds to the N-terminal domain of the chaperone ClpA.

Functionally, involved in the modulation of the specificity of the ClpAP-mediated ATP-dependent protein degradation. This chain is ATP-dependent Clp protease adapter protein ClpS, found in Klebsiella pneumoniae (strain 342).